The following is a 552-amino-acid chain: CTP synthase (552 aa).

The interval 1 to 270 (MTKYVFVTGG…DRIICDELKL (270 aa)) is amidoligase domain. A CTP-binding site is contributed by serine 13. Serine 13 lines the UTP pocket. ATP contacts are provided by residues 14-19 (SLGKGI) and aspartate 71. Residues aspartate 71 and glutamate 144 each coordinate Mg(2+). CTP contacts are provided by residues 151–153 (DIE), 191–196 (KTKPTQ), and lysine 227. Residues 191 to 196 (KTKPTQ) and lysine 227 contribute to the UTP site. Residues 295-547 (TIGMVGKYVD…VEAALANKQA (253 aa)) form the Glutamine amidotransferase type-1 domain. Glycine 356 lines the L-glutamine pocket. The active-site Nucleophile; for glutamine hydrolysis is the cysteine 383. L-glutamine-binding positions include 384 to 387 (LGMQ), glutamate 407, and arginine 473. Residues histidine 520 and glutamate 522 contribute to the active site.

It belongs to the CTP synthase family. As to quaternary structure, homotetramer.

It carries out the reaction UTP + L-glutamine + ATP + H2O = CTP + L-glutamate + ADP + phosphate + 2 H(+). It catalyses the reaction L-glutamine + H2O = L-glutamate + NH4(+). The enzyme catalyses UTP + NH4(+) + ATP = CTP + ADP + phosphate + 2 H(+). It functions in the pathway pyrimidine metabolism; CTP biosynthesis via de novo pathway; CTP from UDP: step 2/2. With respect to regulation, allosterically activated by GTP, when glutamine is the substrate; GTP has no effect on the reaction when ammonia is the substrate. The allosteric effector GTP functions by stabilizing the protein conformation that binds the tetrahedral intermediate(s) formed during glutamine hydrolysis. Inhibited by the product CTP, via allosteric rather than competitive inhibition. Functionally, catalyzes the ATP-dependent amination of UTP to CTP with either L-glutamine or ammonia as the source of nitrogen. Regulates intracellular CTP levels through interactions with the four ribonucleotide triphosphates. The polypeptide is CTP synthase (Burkholderia vietnamiensis (strain G4 / LMG 22486) (Burkholderia cepacia (strain R1808))).